Reading from the N-terminus, the 761-residue chain is Cytoplasmic export protein 1 (761 aa).

2 HEAT repeats span residues 385-423 (IYPHFIQGLTDSDATLRLQTLKTIPCIVSCLTERQLNNE) and 498-534 (NTIANKILTVIAPGLLDKSPIVRGRAKILFEEYLEKL). 2 disordered regions span residues 660-692 (DDGWIQDESGPSKVPQKHTRPQNSTLAKSIAPS) and 714-761 (STVT…DTNW). Composition is skewed to polar residues over residues 680 to 692 (PQNSTLAKSIAPS) and 714 to 737 (STVTTKSSLSNKTARSKPISSIRG). Positions 747 to 761 (GWDDDGDSDSWDTNW) are enriched in acidic residues. Phosphoserine is present on Ser754.

In terms of assembly, associates with the nuclear pore complex (NPC). Interacts with GSP1, LOS1, MSN5, NUP116 and TEF2.

It localises to the cytoplasm. Component of the nuclear tRNA export machinery that my collect tRNA from the nuclear tRNA export receptors of the aminoacylation-dependent export and may deliver aminoacylated tRNAs to the translation machinery pathway at the nuclear pore complex. The sequence is that of Cytoplasmic export protein 1 (CEX1) from Saccharomyces cerevisiae (strain ATCC 204508 / S288c) (Baker's yeast).